Reading from the N-terminus, the 490-residue chain is Protein nucleotidyltransferase YdiU (490 aa).

ATP is bound by residues Gly-94, Gly-96, Arg-97, Lys-117, Asp-129, Gly-130, Arg-180, and Arg-187. The active-site Proton acceptor is the Asp-256. Positions 257 and 266 each coordinate Mg(2+). ATP is bound at residue Asp-266.

The protein belongs to the SELO family. Requires Mg(2+) as cofactor. Mn(2+) serves as cofactor.

It carries out the reaction L-seryl-[protein] + ATP = 3-O-(5'-adenylyl)-L-seryl-[protein] + diphosphate. The enzyme catalyses L-threonyl-[protein] + ATP = 3-O-(5'-adenylyl)-L-threonyl-[protein] + diphosphate. The catalysed reaction is L-tyrosyl-[protein] + ATP = O-(5'-adenylyl)-L-tyrosyl-[protein] + diphosphate. It catalyses the reaction L-histidyl-[protein] + UTP = N(tele)-(5'-uridylyl)-L-histidyl-[protein] + diphosphate. It carries out the reaction L-seryl-[protein] + UTP = O-(5'-uridylyl)-L-seryl-[protein] + diphosphate. The enzyme catalyses L-tyrosyl-[protein] + UTP = O-(5'-uridylyl)-L-tyrosyl-[protein] + diphosphate. Nucleotidyltransferase involved in the post-translational modification of proteins. It can catalyze the addition of adenosine monophosphate (AMP) or uridine monophosphate (UMP) to a protein, resulting in modifications known as AMPylation and UMPylation. This chain is Protein nucleotidyltransferase YdiU, found in Clostridium beijerinckii (strain ATCC 51743 / NCIMB 8052) (Clostridium acetobutylicum).